Reading from the N-terminus, the 252-residue chain is Phosphoglycolate phosphatase (252 aa).

The active-site Nucleophile is Asp13. 3 residues coordinate Mg(2+): Asp13, Asp15, and Asp192.

This sequence belongs to the HAD-like hydrolase superfamily. CbbY/CbbZ/Gph/YieH family. Monomer. Mg(2+) serves as cofactor. Chloride is required as a cofactor.

The enzyme catalyses 2-phosphoglycolate + H2O = glycolate + phosphate. It participates in organic acid metabolism; glycolate biosynthesis; glycolate from 2-phosphoglycolate: step 1/1. In terms of biological role, specifically catalyzes the dephosphorylation of 2-phosphoglycolate. Is involved in the dissimilation of the intracellular 2-phosphoglycolate formed during the DNA repair of 3'-phosphoglycolate ends, a major class of DNA lesions induced by oxidative stress. This chain is Phosphoglycolate phosphatase, found in Shigella flexneri.